The following is a 145-amino-acid chain: Deoxyuridine 5'-triphosphate nucleotidohydrolase (145 aa).

Substrate contacts are provided by residues 62-64, asparagine 75, 79-81, and lysine 89; these read RSG and TVD.

Belongs to the dUTPase family. It depends on Mg(2+) as a cofactor.

The catalysed reaction is dUTP + H2O = dUMP + diphosphate + H(+). It participates in pyrimidine metabolism; dUMP biosynthesis; dUMP from dCTP (dUTP route): step 2/2. Its function is as follows. This enzyme is involved in nucleotide metabolism: it produces dUMP, the immediate precursor of thymidine nucleotides and it decreases the intracellular concentration of dUTP so that uracil cannot be incorporated into DNA. The sequence is that of Deoxyuridine 5'-triphosphate nucleotidohydrolase from Helicobacter pylori (strain J99 / ATCC 700824) (Campylobacter pylori J99).